Reading from the N-terminus, the 366-residue chain is RNA 3'-terminal phosphate cyclase (366 aa).

Gln104, Pro131, Tyr294, Asp297, Gln298, and His320 together coordinate ATP. The active-site Tele-AMP-histidine intermediate is the His320.

The protein belongs to the RNA 3'-terminal cyclase family. Type 1 subfamily.

It localises to the nucleus. The protein resides in the nucleoplasm. The enzyme catalyses a 3'-end 3'-phospho-ribonucleotide-RNA + ATP = a 3'-end 2',3'-cyclophospho-ribonucleotide-RNA + AMP + diphosphate. Catalyzes the conversion of 3'-phosphate to a 2',3'-cyclic phosphodiester at the end of RNA. The mechanism of action of the enzyme occurs in 3 steps: (A) adenylation of the enzyme by ATP; (B) transfer of adenylate to an RNA-N3'P to produce RNA-N3'PP5'A; (C) and attack of the adjacent 2'-hydroxyl on the 3'-phosphorus in the diester linkage to produce the cyclic end product. Likely functions in some aspects of cellular RNA processing. Function plays an important role in regulating axon regeneration by inhibiting central nervous system (CNS) axon regeneration following optic nerve injury. This chain is RNA 3'-terminal phosphate cyclase (RTCA), found in Bos taurus (Bovine).